The primary structure comprises 300 residues: Protein TRACHEARY ELEMENT DIFFERENTIATION-RELATED 7A (300 aa).

Positions 1–181 are disordered; sequence MASPLSQSVF…HIIPPPPPSP (181 aa). Residues 1–187 are Extracellular-facing; the sequence is MASPLSQSVF…PPSPSNHSTT (187 aa). A compositionally biased stretch (pro residues) spans 12–181; the sequence is HFPPPSPAAT…HIIPPPPPSP (170 aa). N-linked (GlcNAc...) asparagine glycosylation occurs at N183. A helical membrane pass occupies residues 188–208; the sequence is IVVIFVSCGGVFFLAFAMAAL. Residues 209 to 300 are Cytoplasmic-facing; sequence WCFLKKKKKK…SSFGHHYLHG (92 aa).

In terms of tissue distribution, accumulates in cells differentiating into tracheary element (TE) which undergo secondary cell wall (SCW) formation.

Its subcellular location is the cell membrane. The protein resides in the secreted. The protein localises to the cell wall. Its function is as follows. Involved in the secondary cell wall (SCW) formation of vessel elements (e.g. protoxylem and metaxylem), thus promoting tracheary element (TE) differentiation. This Zinnia elegans (Garden zinnia) protein is Protein TRACHEARY ELEMENT DIFFERENTIATION-RELATED 7A.